A 321-amino-acid chain; its full sequence is Glucokinase (321 aa).

8–13 lines the ATP pocket; that stretch reads GDVGGT.

This sequence belongs to the bacterial glucokinase family.

It localises to the cytoplasm. The catalysed reaction is D-glucose + ATP = D-glucose 6-phosphate + ADP + H(+). In Tolumonas auensis (strain DSM 9187 / NBRC 110442 / TA 4), this protein is Glucokinase.